The chain runs to 534 residues: Dolichol kinase (534 aa).

Over 1-16 the chain is Cytoplasmic; that stretch reads MTRQCPPQESGAALSG. A helical membrane pass occupies residues 17–37; it reads SVLAEAAVVFAVVLSIHAAVW. Topologically, residues 38-72 are extracellular; that stretch reads DRYSWCAVALAVQAFYVQYKWDRLLQQGNAVFQFR. A helical transmembrane segment spans residues 73-93; it reads MSANSGLLPASMVMPLLGLVM. Over 94 to 109 the chain is Cytoplasmic; sequence KERCQTAGNPYFERFG. Residues 110–130 form a helical membrane-spanning segment; it reads IVVAATGMAVALFSSVLALGI. Residues 131–132 are Extracellular-facing; it reads TR. Residues 133–153 traverse the membrane as a helical segment; the sequence is PVPTNTCAISGLAGGVIIYIM. At 154-161 the chain is on the cytoplasmic side; sequence RHSLSVGE. Residues 162 to 182 traverse the membrane as a helical segment; sequence VIEVLEVLLIFVYLNMILLYL. Residues 183–186 lie on the Extracellular side of the membrane; sequence LPRC. The helical transmembrane segment at 187–207 threads the bilayer; the sequence is FTPGEALLVLGGISFVLNQLI. Residues 208-220 are Cytoplasmic-facing; that stretch reads KRSLTESQGDPVD. Residues 221-241 traverse the membrane as a helical segment; sequence FFLLVVVVGMVLMGVFFSTLF. At 242 to 252 the chain is on the extracellular side; the sequence is VFMDSGTWASS. Residues 253-273 traverse the membrane as a helical segment; sequence IFFHLMTCVLGLGVVLPWLHW. Residues 274-293 lie on the Cytoplasmic side of the membrane; sequence LIRRNPLLWLLQFLFYTETR. Residues 294–314 traverse the membrane as a helical segment; the sequence is IYLLAYWSLLASVACLVVLYQ. Topologically, residues 315-333 are extracellular; that stretch reads NAKRSSSESKKHRAPTITR. A helical membrane pass occupies residues 334 to 350; that stretch reads KYFHFIVVATYIPGIIF. Topologically, residues 351-355 are cytoplasmic; sequence DRPLL. Residues 356-376 form a helical membrane-spanning segment; the sequence is YVAATVCLAVFIFLEYVRYFR. At 377–397 the chain is on the extracellular side; the sequence is IKPLGHTLRSLLSLFLDERDS. Residues 398–418 form a helical membrane-spanning segment; it reads GPLILTHIYLLLGMSLPIWLI. Topologically, residues 419–432 are cytoplasmic; sequence PRPCTQKDSLEGAR. Residues 433–453 form a helical membrane-spanning segment; it reads ALVPYAGVLAVGVGDTVASIF. Over 454 to 468 the chain is Extracellular; it reads GSTMGEIRWPGTKKT. The interval 455-470 is CTP-binding; that stretch reads STMGEIRWPGTKKTFE. A helical transmembrane segment spans residues 469–489; sequence FEGTMTSIFAQIISVALILIF. Residues 490–491 lie on the Cytoplasmic side of the membrane; it reads DS. Residues 492–512 form a helical membrane-spanning segment; sequence GVDLNYSYAWILGSISTVSLL. Residues 513–534 are Extracellular-facing; the sequence is EAYTTQIDNLLLPLYLLILLMA.

The protein belongs to the polyprenol kinase family.

It is found in the endoplasmic reticulum membrane. It catalyses the reaction a di-trans,poly-cis-dolichol + CTP = a di-trans,poly-cis-dolichyl phosphate + CDP + H(+). It participates in protein modification; protein glycosylation. Catalyzes CTP-mediated phosphorylation of dolichol, the terminal step in de novo dolichyl monophosphate (Dol-P) biosynthesis. Dol-P is a lipid carrier essential for the synthesis of N-linked and O-linked oligosaccharides and for GPI anchors. The protein is Dolichol kinase of Mus musculus (Mouse).